Reading from the N-terminus, the 328-residue chain is Malate dehydrogenase (328 aa).

NAD(+) is bound at residue 11–17 (GAAGQIG). 2 residues coordinate substrate: Arg-94 and Arg-100. NAD(+) contacts are provided by residues Asn-107, Gln-114, and 131 to 133 (VGN). Substrate contacts are provided by Asn-133 and Arg-164. His-189 (proton acceptor) is an active-site residue.

This sequence belongs to the LDH/MDH superfamily. MDH type 2 family.

The catalysed reaction is (S)-malate + NAD(+) = oxaloacetate + NADH + H(+). In terms of biological role, catalyzes the reversible oxidation of malate to oxaloacetate. The polypeptide is Malate dehydrogenase (Xylella fastidiosa (strain M23)).